Here is a 169-residue protein sequence, read N- to C-terminus: MKKWMLAICLMFINGICEAADCFDLAGRDYKIDPDLLRAISWKESRYRVNAIGINPVTGYGSGLMQVDSQHFNELARYGIKPEHLTTDPCMNIYTGAYYLAIAFKKWGVSWEAVGAYNAGFRKTERQNQRRLAYASEVYRIYTWIKSSKGIRVPTTKKSLSQINSVQKN.

Belongs to the IagB/IpgF/P19 family.

This chain is X polypeptide (X), found in Escherichia coli.